The primary structure comprises 279 residues: Cytochrome c1 (279 aa).

A signal peptide spans 1–21 (MKKLLISAVSALVLGSGAAFA). 4 residues coordinate heme c: Cys55, Cys58, His59, and Met204. A helical transmembrane segment spans residues 248-266 (MGLVAMVMLGLLSVMLYLT).

In terms of assembly, the main subunits of complex b-c1 are: cytochrome b, cytochrome c1 and the Rieske protein. Binds 1 heme c group covalently per subunit.

The protein localises to the cell membrane. Its function is as follows. Component of the ubiquinol-cytochrome c reductase complex (complex III or cytochrome b-c1 complex), which is a respiratory chain that generates an electrochemical potential coupled to ATP synthesis. c1 functions as an electron donor to cytochrome c. The polypeptide is Cytochrome c1 (petC) (Rhodobacter capsulatus (strain ATCC BAA-309 / NBRC 16581 / SB1003)).